The sequence spans 100 residues: Large ribosomal subunit protein uL23 (100 aa).

It belongs to the universal ribosomal protein uL23 family. As to quaternary structure, part of the 50S ribosomal subunit. Contacts protein L29, and trigger factor when it is bound to the ribosome.

In terms of biological role, one of the early assembly proteins it binds 23S rRNA. One of the proteins that surrounds the polypeptide exit tunnel on the outside of the ribosome. Forms the main docking site for trigger factor binding to the ribosome. In Mycobacterium sp. (strain JLS), this protein is Large ribosomal subunit protein uL23.